Reading from the N-terminus, the 507-residue chain is ATP synthase subunit alpha, chloroplastic (507 aa).

170–177 (GDRQTGKT) lines the ATP pocket.

This sequence belongs to the ATPase alpha/beta chains family. In terms of assembly, F-type ATPases have 2 components, CF(1) - the catalytic core - and CF(0) - the membrane proton channel. CF(1) has five subunits: alpha(3), beta(3), gamma(1), delta(1), epsilon(1). CF(0) has four main subunits: a, b, b' and c.

Its subcellular location is the plastid. It is found in the chloroplast thylakoid membrane. The catalysed reaction is ATP + H2O + 4 H(+)(in) = ADP + phosphate + 5 H(+)(out). In terms of biological role, produces ATP from ADP in the presence of a proton gradient across the membrane. The alpha chain is a regulatory subunit. The polypeptide is ATP synthase subunit alpha, chloroplastic (Physcomitrium patens (Spreading-leaved earth moss)).